A 321-amino-acid chain; its full sequence is Fibronectin type III domain-containing protein 8 (321 aa).

The region spanning 175–277 is the Fibronectin type-III domain; sequence VPEVPFICEH…KPYKFATVST (103 aa).

In Mus musculus (Mouse), this protein is Fibronectin type III domain-containing protein 8 (Fndc8).